A 215-amino-acid chain; its full sequence is Ribonuclease T (215 aa).

The Exonuclease domain maps to 21–195 (VVIDVETAGF…YDSKKTAELF (175 aa)). Asp-24, Glu-26, His-182, and Asp-187 together coordinate Mg(2+). Catalysis depends on His-182, which acts as the Proton donor/acceptor.

Belongs to the RNase T family. Homodimer. Mg(2+) is required as a cofactor.

Its function is as follows. Trims short 3' overhangs of a variety of RNA species, leaving a one or two nucleotide 3' overhang. Responsible for the end-turnover of tRNA: specifically removes the terminal AMP residue from uncharged tRNA (tRNA-C-C-A). Also appears to be involved in tRNA biosynthesis. This chain is Ribonuclease T, found in Wigglesworthia glossinidia brevipalpis.